Here is a 202-residue protein sequence, read N- to C-terminus: UPF0102 protein Dde_1093 (202 aa).

This sequence belongs to the UPF0102 family.

The polypeptide is UPF0102 protein Dde_1093 (Oleidesulfovibrio alaskensis (strain ATCC BAA-1058 / DSM 17464 / G20) (Desulfovibrio alaskensis)).